The sequence spans 507 residues: Alkyl hydroperoxide reductase subunit F (507 aa).

Position 207–222 (Asp-207–Ile-222) interacts with FAD. Residues Cys-335 and Cys-338 are joined by a disulfide bond. Asp-347–Ala-361 contributes to the NAD(+) binding site. FAD is bound at residue Thr-467–Asp-477.

It belongs to the class-II pyridine nucleotide-disulfide oxidoreductase family. Homodimer. The cofactor is FAD.

Serves to protect the cell against DNA damage by alkyl hydroperoxides. It can use either NADH or NADPH as electron donor for direct reduction of redox dyes or of alkyl hydroperoxides when combined with the AhpC protein. In Staphylococcus aureus (strain Mu50 / ATCC 700699), this protein is Alkyl hydroperoxide reductase subunit F (ahpF).